Consider the following 722-residue polypeptide: MTELKPLLIELGTEELPVNALPSLSRAFFEGVLAGLERRGIVIDHGEAKSLSTPRRLAVLLTAVAVEQPKQYRELFGPYLNTAFDTEGKPTKALEGFAAKCGVNWRTLERIRDTKGERFVHRVVVPGERTDALLPGILTEAIAGMPIPKPMRWGAHEYLFARPVHWLVMLFGQDVVEAEIMGVKAGRISRGHRFLYDKPVSLSDPQNYIDVLQAAYVLVDPAARRARIVAEIEAVARQVGGVARITEDNVAQVVNLVEWPSAVLCSFERVFLEVPQEALIQTMEVNQKFFPVLDSLGKLTEKFIGIANIESNDVAEVAKGYERVIRPRFSDAKFFFNEDLKQGLKAMGERLRTVTYHAKLGTLADKVARVLVLAEAIAPQIGVDPLLARRVALLSKNDLQSRMVNEFPELQGVAGHHYALISGELPEVAMAIEDAYRPRFSGDEIARSPLGKVLGLAERLDTLACGFAVGMKPTGNKDPFGLRRNALGLARTIIESRFDLDLKVLLDQASDWVAFATTIEQERHAQESVKQSKKEAAVKHSLPQVSDEKSARIEELYDFIVERLRGYYADKGIPTTHFNAVAELKPVSLYDFHRRLDAIGRFAALPEAEALAVANKRIRNILRKAEIKIPASVDATLFDQPAESGLLVALEGVITDTRSALDCKNYVSVLTCLARLRPPIDEFFDKVMVNDENLMLRANRLALLQRLGEYLCCVAAIEHLSN.

Belongs to the class-II aminoacyl-tRNA synthetase family. As to quaternary structure, tetramer of two alpha and two beta subunits.

The protein localises to the cytoplasm. The enzyme catalyses tRNA(Gly) + glycine + ATP = glycyl-tRNA(Gly) + AMP + diphosphate. The chain is Glycine--tRNA ligase beta subunit from Xylella fastidiosa (strain M12).